A 548-amino-acid chain; its full sequence is Solute carrier family 22 member 7 (548 aa).

The next 12 membrane-spanning stretches (helical) occupy residues 21 to 41, 146 to 166, 180 to 200, 204 to 224, 234 to 254, 259 to 279, 346 to 366, 376 to 397, 404 to 423, 432 to 452, 466 to 486, and 493 to 513; these read VALL…PIFL, AAST…GYLS, VSTL…MFAI, LTGS…LEWL, VLSS…GYLI, WLLL…WWVP, ISLC…GLSL, YQTQ…YLSV, LTQA…RLLV, TVLA…AYLF, MGLT…AALL, and LPKL…LLLP. Residues 522-548 form a disordered region; the sequence is ETIQDVERKSAPTSLQEEEMPMKQVQN.

The protein belongs to the major facilitator (TC 2.A.1) superfamily. Organic cation transporter (TC 2.A.1.19) family.

The protein resides in the basolateral cell membrane. Its subcellular location is the apical cell membrane. It is found in the cell membrane. The catalysed reaction is orotate(out) + L-glutamate(in) = orotate(in) + L-glutamate(out). It catalyses the reaction 3',5'-cyclic GMP(in) = 3',5'-cyclic GMP(out). It carries out the reaction GMP(in) = GMP(out). The enzyme catalyses 2'-deoxyguanosine(in) = 2'-deoxyguanosine(out). The catalysed reaction is GDP(in) = GDP(out). It catalyses the reaction guanosine(in) = guanosine(out). It carries out the reaction GTP(in) = GTP(out). The enzyme catalyses 3',5'-cyclic AMP(in) = 3',5'-cyclic AMP(out). The catalysed reaction is creatinine(in) = creatinine(out). It catalyses the reaction prostaglandin E2(out) = prostaglandin E2(in). It carries out the reaction 2-oxoglutarate(in) = 2-oxoglutarate(out). The enzyme catalyses glutarate(in) = glutarate(out). The catalysed reaction is urate(out) = urate(in). It catalyses the reaction estrone 3-sulfate(out) = estrone 3-sulfate(in). In terms of biological role, functions as a Na(+)-independent bidirectional multispecific transporter. Contributes to the renal and hepatic elimination of endogenous organic compounds from the systemic circulation into the urine and bile, respectively. Capable of transporting a wide range of purine and pyrimidine nucleobases, nucleosides and nucleotides, with cGMP, 2'deoxyguanosine and GMP being the preferred substrates. Functions as a pH- and chloride-independent cGMP bidirectional facilitative transporter that can regulate both intracellular and extracellular levels of cGMP and may be involved in cGMP signaling pathways. Mediates orotate/glutamate bidirectional exchange and most likely display a physiological role in hepatic release of glutamate into the blood. Involved in renal secretion and possible reabsorption of creatinine. Able to uptake prostaglandin E2 (PGE2) and may contribute to PGE2 renal excretion. Also transports alpha-ketoglutarate and urate. Apart from the orotate/glutamate exchange, the counterions for the uptake of other SLC22A7/OAT2 substrates remain to be identified. The sequence is that of Solute carrier family 22 member 7 (SLC22A7) from Pongo abelii (Sumatran orangutan).